Here is a 1311-residue protein sequence, read N- to C-terminus: Nephrocystin-3 (1311 aa).

Residues 81–183 (SKNNEIASMQ…LQRLQAQGIQ (103 aa)) are a coiled coil. TPR repeat units lie at residues 889 to 923 (LSYW…EEKM), 927 to 960 (ADLY…RETA), 969 to 1002 (AQSL…SENA), 1011 to 1044 (AREL…RQKS), 1077 to 1110 (ARTL…RERV), 1119 to 1152 (AQSI…RRRA), 1161 to 1194 (AYTV…RQKS), 1203 to 1236 (ATAL…YEDS), and 1245 to 1278 (GETL…KETE).

The protein localises to the cell projection. The protein resides in the cilium. Functionally, required for normal ciliary development and function. Inhibits disheveled-1-induced canonical Wnt-signaling activity and may also play a role in the control of non-canonical Wnt signaling that regulates planar cell polarity. Probably acts as a molecular switch between different Wnt signaling pathways. Required for proper convergent extension cell movements. This chain is Nephrocystin-3 (nphp3), found in Xenopus tropicalis (Western clawed frog).